Here is a 160-residue protein sequence, read N- to C-terminus: Putative 4-hydroxy-4-methyl-2-oxoglutarate aldolase (160 aa).

Substrate-binding positions include Gly76 to Ile79 and Arg98. Position 99 (Asp99) interacts with a divalent metal cation.

Belongs to the class II aldolase/RraA-like family. As to quaternary structure, homotrimer. A divalent metal cation serves as cofactor.

The enzyme catalyses 4-hydroxy-4-methyl-2-oxoglutarate = 2 pyruvate. It catalyses the reaction oxaloacetate + H(+) = pyruvate + CO2. Catalyzes the aldol cleavage of 4-hydroxy-4-methyl-2-oxoglutarate (HMG) into 2 molecules of pyruvate. Also contains a secondary oxaloacetate (OAA) decarboxylase activity due to the common pyruvate enolate transition state formed following C-C bond cleavage in the retro-aldol and decarboxylation reactions. In Alcanivorax borkumensis (strain ATCC 700651 / DSM 11573 / NCIMB 13689 / SK2), this protein is Putative 4-hydroxy-4-methyl-2-oxoglutarate aldolase.